A 668-amino-acid chain; its full sequence is Alpha-1,4-glucan:maltose-1-phosphate maltosyltransferase (668 aa).

Residues Arg-263 to Gly-288 are disordered. Alpha-maltose 1-phosphate-binding residues include Lys-264, Gln-324, and Asp-359. The active-site Nucleophile is the Asp-395. Asn-396 lines the alpha-maltose 1-phosphate pocket. Catalysis depends on Glu-424, which acts as the Proton donor. Lys-535–Tyr-536 contributes to the alpha-maltose 1-phosphate binding site.

This sequence belongs to the glycosyl hydrolase 13 family. GlgE subfamily. As to quaternary structure, homodimer.

It carries out the reaction alpha-maltose 1-phosphate + [(1-&gt;4)-alpha-D-glucosyl](n) = [(1-&gt;4)-alpha-D-glucosyl](n+2) + phosphate. Its function is as follows. Maltosyltransferase that uses maltose 1-phosphate (M1P) as the sugar donor to elongate linear or branched alpha-(1-&gt;4)-glucans. Is involved in a branched alpha-glucan biosynthetic pathway from trehalose, together with TreS, Mak and GlgB. The sequence is that of Alpha-1,4-glucan:maltose-1-phosphate maltosyltransferase from Cereibacter sphaeroides (strain ATCC 17023 / DSM 158 / JCM 6121 / CCUG 31486 / LMG 2827 / NBRC 12203 / NCIMB 8253 / ATH 2.4.1.) (Rhodobacter sphaeroides).